We begin with the raw amino-acid sequence, 216 residues long: 3-isopropylmalate dehydratase small subunit (216 aa).

It belongs to the LeuD family. LeuD type 1 subfamily. Heterodimer of LeuC and LeuD.

The enzyme catalyses (2R,3S)-3-isopropylmalate = (2S)-2-isopropylmalate. It participates in amino-acid biosynthesis; L-leucine biosynthesis; L-leucine from 3-methyl-2-oxobutanoate: step 2/4. Its function is as follows. Catalyzes the isomerization between 2-isopropylmalate and 3-isopropylmalate, via the formation of 2-isopropylmaleate. The chain is 3-isopropylmalate dehydratase small subunit from Burkholderia ambifaria (strain MC40-6).